Here is a 643-residue protein sequence, read N- to C-terminus: Mediator of RNA polymerase II transcription subunit 17 (643 aa).

Residues 53–82 (SDSEEDGAERARAGREQWKQEPEEDEGQLK) are disordered. The segment covering 60–73 (AERARAGREQWKQE) has biased composition (basic and acidic residues).

Belongs to the Mediator complex subunit 17 family. As to quaternary structure, component of the Mediator complex.

The protein localises to the nucleus. Its function is as follows. Component of the Mediator complex, a coactivator involved in the regulated transcription of nearly all RNA polymerase II-dependent genes. Mediator functions as a bridge to convey information from gene-specific regulatory proteins to the basal RNA polymerase II transcription machinery. Mediator is recruited to promoters by direct interactions with regulatory proteins and serves as a scaffold for the assembly of a functional preinitiation complex with RNA polymerase II and the general transcription factors. This is Mediator of RNA polymerase II transcription subunit 17 (med17) from Danio rerio (Zebrafish).